The sequence spans 79 residues: Protein OPG081 (79 aa).

Topologically, residues 2–8 (VDAITVL) are intravirion. The helical transmembrane segment at 9–29 (TAIGITVLMLLMVISGAALIV) threads the bilayer. Over 30–47 (KELNPNDIFTMQSLKFNR) the chain is Virion surface. The helical transmembrane segment at 48–68 (AVTIFKYIGLFIYIPGTIILY) threads the bilayer. The Intravirion segment spans residues 69 to 79 (ATYVKSLLMKS).

The protein belongs to the orthopoxvirus OPG081 family.

The protein resides in the virion membrane. In terms of biological role, envelope protein. This Vaccinia virus (strain Western Reserve) (VACV) protein is Protein OPG081 (OPG081).